The chain runs to 117 residues: Large ribosomal subunit protein uL18 (117 aa).

This sequence belongs to the universal ribosomal protein uL18 family. Part of the 50S ribosomal subunit; part of the 5S rRNA/L5/L18/L25 subcomplex. Contacts the 5S and 23S rRNAs.

This is one of the proteins that bind and probably mediate the attachment of the 5S RNA into the large ribosomal subunit, where it forms part of the central protuberance. In Sphingopyxis alaskensis (strain DSM 13593 / LMG 18877 / RB2256) (Sphingomonas alaskensis), this protein is Large ribosomal subunit protein uL18.